The primary structure comprises 32 residues: Trypsin inhibitor 3 (32 aa).

3 disulfide bridges follow: C6-C23, C13-C25, and C19-C31.

Belongs to the protease inhibitor I7 (squash-type serine protease inhibitor) family.

Its subcellular location is the secreted. Its function is as follows. Inhibits trypsin. This chain is Trypsin inhibitor 3, found in Cucurbita pepo (Vegetable marrow).